The sequence spans 171 residues: Adenine phosphoribosyltransferase (171 aa).

It belongs to the purine/pyrimidine phosphoribosyltransferase family. In terms of assembly, homodimer.

It is found in the cytoplasm. The enzyme catalyses AMP + diphosphate = 5-phospho-alpha-D-ribose 1-diphosphate + adenine. It functions in the pathway purine metabolism; AMP biosynthesis via salvage pathway; AMP from adenine: step 1/1. In terms of biological role, catalyzes a salvage reaction resulting in the formation of AMP, that is energically less costly than de novo synthesis. The protein is Adenine phosphoribosyltransferase of Nitrosococcus oceani (strain ATCC 19707 / BCRC 17464 / JCM 30415 / NCIMB 11848 / C-107).